We begin with the raw amino-acid sequence, 2694 residues long: Teneurin-3 (2694 aa).

3 disordered regions span residues 1 to 45 (MDVK…SSSE), 106 to 132 (PSSLSSPSVTEHSHSQPPSPNLHDNQS), and 161 to 198 (TQPAPSHSCNEQPSNQHQQGQSTLPPVPPPHKQQPSVT). A Teneurin N-terminal domain is found at 1-306 (MDVKERRPYC…KSSKYCSWRC (306 aa)). Over 1 to 312 (MDVKERRPYC…SWRCTALSAM (312 aa)) the chain is Cytoplasmic. The span at 163 to 184 (PAPSHSCNEQPSNQHQQGQSTL) shows a compositional bias: polar residues. The chain crosses the membrane as a helical span at residues 313 to 333 (AVSILLSVLLCYCIAMHLFGL). The Extracellular portion of the chain corresponds to 334 to 2694 (NWQLQETEGY…FLRQSEIGKR (2361 aa)). N374 and N413 each carry an N-linked (GlcNAc...) asparagine glycan. EGF-like domains follow at residues 508 to 539 (TLTECPHNCHGNGDCRTGTCHCFPGFLGPDCS), 540 to 570 (RAACPVLCSGNGQYSRGRCLCYSGWKGTECD), 572 to 604 (PSNQCIDIHCSGHGICIMGTCACNTGYKGDNCE), 605 to 636 (EVDCLDPSCSSHGVCIHGECHCNPGWGGNNCE), 638 to 671 (LKTMCPDQCSGHGTYQTESGTCTCDTNWTGPDCS), 672 to 703 (IEVCAVDCGSHGVCIGGSCRCEEGWTGSVCDL), 704 to 733 (KACHPRCTEHGTCKDGKCECHQGWTGEHCT), and 734 to 768 (VEGCPGLCNSNGRCTLDQNGWHCVCQPGWRGAGCD). Disulfide bonds link C512–C522, C516–C527, C529–C538, C547–C558, C560–C569, C576–C587, C581–C592, C594–C603, C608–C619, C613–C624, C626–C635, C646–C659, C661–C670, C675–C685, C679–C690, C692–C701, C706–C716, C710–C721, C723–C732, C737–C747, C741–C756, and C758–C767. N-linked (GlcNAc...) asparagine glycosylation is present at N664. Residues N854, N877, and N1048 are each glycosylated (N-linked (GlcNAc...) asparagine). 5 NHL repeats span residues 1166–1192 (LLAPVALACGSDGSLFVGDFNYIRRIF), 1194–1238 (SGNV…PKAL), 1264–1308 (ARCG…NGII), 1325–1365 (CDNS…ITEN), and 1452–1495 (CYQT…IRHN). A glycan (N-linked (GlcNAc...) asparagine) is linked at N1196. Residues 1505-1524 (FEVASPASQELYVFDSNGTH) form a YD 1 repeat. 2 N-linked (GlcNAc...) asparagine glycosylation sites follow: N1521 and N1538. YD repeat units follow at residues 1541 to 1561 (YSNEDDVTAVTDSSGNTLRVR), 1604 to 1623 (YHGNSGLLATKSIQIGWTTF), and 1624 to 1646 (YDYDSEGRLTNVTFPTGVITSLI). Residues N1634, N1671, N1729, and N1814 are each glycosylated (N-linked (GlcNAc...) asparagine). YD repeat units lie at residues 1817–1836 (YSSTGQVTSLQRGPTTERVE), 1858–1876 (YLDKSMVLLLHSQRQYIFD), 1877–1897 (YDLQDRLSAITMPSVARHTMQ), 1904–1921 (YYRNIYNPPESNASVTVD), 1922–1943 (YSEDGQLLRVAHLGTGRRVLYK), 1944–1961 (YRRQNKLSEILYDSTRVS), 1964–1984 (YDETAGVLKTVNLQSEGFICS), 1987–2007 (YRQIGPLVDRQIFRFSEDGMV), 2015–2034 (YDNSFRVTSMQGVINETPLP), 2040–2057 (FDDISGKVEQFGKFGVIY), 2058–2084 (YDINQIISTAVMTYTKHFDVHGRIKEI), 2086–2099 (YEIFRSLMYWITIQ), 2100–2123 (YDNMGRVTKREIKIGPFANTTKYG), 2126–2146 (YDVDGQLQTVYLNEKMMWRYN), 2147–2167 (YDLNGNLHLLNPGNSARLTPL), 2169–2189 (YDLRDRITRLGDVQYRMDEDG), 2201–2221 (YNSKGLLVRVHSKASGWTIQY), and 2223–2243 (YDGLGRRLASRNSLGQHLQFF). The N-linked (GlcNAc...) asparagine glycan is linked to N1915. Residue N2118 is glycosylated (N-linked (GlcNAc...) asparagine). N-linked (GlcNAc...) asparagine glycosylation is present at N2258. The YD 23 repeat unit spans residues 2269–2310 (YDLQGHLFAMEISSGEEFYIACDNTGTPLAVFSSNGLLLKQV). The N-linked (GlcNAc...) asparagine glycan is linked to N2571.

The protein belongs to the tenascin family. Teneurin subfamily. Homodimer; disulfide-linked; to mediate homophilic cell adhesion. As to expression, expressed by retinal ganglion cells and their presynaptic amacrine and postsynaptic tectal cell targets.

It is found in the cell membrane. The protein localises to the cell projection. It localises to the axon. In terms of biological role, involved in neural development by regulating the establishment of proper connectivity within the nervous system. Acts in both pre- and postsynaptic neurons in the hippocampus to control the assembly of a precise topographic projection: required in both CA1 and subicular neurons for the precise targeting of proximal CA1 axons to distal subiculum, probably by promoting homophilic cell adhesion. Required by retinal ganglion cells for acquisition of their correct morphological and functional connectivity, thereby playing a key role in the development of the visual pathway. This Danio rerio (Zebrafish) protein is Teneurin-3 (tenm3).